The primary structure comprises 185 residues: Peptidyl-tRNA hydrolase (185 aa).

Phe-14 lines the tRNA pocket. His-19 serves as the catalytic Proton acceptor. Tyr-64, Asn-66, and Asn-112 together coordinate tRNA.

The protein belongs to the PTH family. As to quaternary structure, monomer.

It localises to the cytoplasm. It catalyses the reaction an N-acyl-L-alpha-aminoacyl-tRNA + H2O = an N-acyl-L-amino acid + a tRNA + H(+). Hydrolyzes ribosome-free peptidyl-tRNAs (with 1 or more amino acids incorporated), which drop off the ribosome during protein synthesis, or as a result of ribosome stalling. In terms of biological role, catalyzes the release of premature peptidyl moieties from peptidyl-tRNA molecules trapped in stalled 50S ribosomal subunits, and thus maintains levels of free tRNAs and 50S ribosomes. The polypeptide is Peptidyl-tRNA hydrolase (Exiguobacterium sp. (strain ATCC BAA-1283 / AT1b)).